The chain runs to 383 residues: Putative gustatory receptor 22c (383 aa).

The Cytoplasmic portion of the chain corresponds to 1 to 11 (MFASRSDLQSR). The helical transmembrane segment at 12–32 (LCWIILKATLYSSWFLGVFPY) threads the bilayer. The Extracellular portion of the chain corresponds to 33–45 (RFDSRNGQLKRSR). A helical membrane pass occupies residues 46–66 (FLLFYGLILNFFLLLKMVCSG). Residues 67 to 86 (GQKLGIPEAFARNSVLENTH) are Cytoplasmic-facing. A helical membrane pass occupies residues 87 to 107 (YTTGMLAVFSCVVIHFLNFWG). Over 108–144 (STRVQDLANELLVLEYQQFASLNETKCPKFNSFVIQK) the chain is Extracellular. The N-linked (GlcNAc...) asparagine glycan is linked to asparagine 130. Residues 145 to 165 (WLSVIGLLLSYLSIAYGLPGN) traverse the membrane as a helical segment. The Cytoplasmic portion of the chain corresponds to 166–250 (NFSVEMVLIN…YMVATYEYHM (85 aa)). Residues 251 to 271 (TLVLTTGLASNFLAIYSWIVL) form a helical membrane-spanning segment. The Extracellular portion of the chain corresponds to 272–279 (DISMNINF). The chain crosses the membrane as a helical span at residues 280–300 (IYLLIFPLFLLVNVWNLWLSI). Over 301 to 360 (AASDLAENAGKSTQTVLKLFADLEVKDIELERSVNEFALLCGHCQFNFHVCGLFTINYKM) the chain is Cytoplasmic. Residues 361–381 (GFQMIITSFLYLIYMIQFDFM) traverse the membrane as a helical segment. The Extracellular portion of the chain corresponds to 382–383 (NL).

Belongs to the insect chemoreceptor superfamily. Gustatory receptor (GR) family. Gr22e subfamily. Taste bristles in the foreleg and labial palps.

The protein localises to the cell membrane. In terms of biological role, probable gustatory receptor which mediates acceptance or avoidance behavior, depending on its substrates. The protein is Putative gustatory receptor 22c (Gr22c) of Drosophila melanogaster (Fruit fly).